The sequence spans 624 residues: Iron transport multicopper oxidase FET3 (624 aa).

The signal sequence occupies residues 1-20 (MRTFLSSFIILTTFLASLIA). Over 21 to 555 (AETHTWYFKT…KRLPTGFTTK (535 aa)) the chain is Extracellular. Plastocyanin-like domains are found at residues 46-144 (IGFN…FIIE) and 190-292 (NFLF…LQVN). Asn-49 and Asn-77 each carry an N-linked (GlcNAc...) asparagine glycan. 2 residues coordinate Cu cation: His-81 and His-83. Asn-113 carries an N-linked (GlcNAc...) asparagine glycan. 2 residues coordinate Cu cation: His-126 and His-128. 7 N-linked (GlcNAc...) asparagine glycosylation sites follow: Asn-194, Asn-198, Asn-244, Asn-265, Asn-292, Asn-300, and Asn-359. A Plastocyanin-like 3 domain is found at 382 to 499 (NELIYGTNTN…QGLAVVLIED (118 aa)). Positions 413, 416, and 418 each coordinate Cu cation. N-linked (GlcNAc...) asparagine glycosylation is present at Asn-441. His-481, Cys-482, His-483, and His-487 together coordinate Cu cation. Residues 556-576 (GIVALVFSCVAAFLGLFSFSF) traverse the membrane as a helical segment. Topologically, residues 577–624 (YGMNDIAHVEDKVARDLDIDLEAENEDEEEAVVLNQNSSSSDSNSKPH) are cytoplasmic. A disordered region spans residues 603–624 (DEEEAVVLNQNSSSSDSNSKPH). Residues 608 to 624 (VVLNQNSSSSDSNSKPH) show a composition bias toward low complexity.

It belongs to the multicopper oxidase family. It depends on Cu cation as a cofactor.

The protein resides in the cell membrane. Its function is as follows. Iron transport multicopper ferroxidase required for Fe(2+) high affinity uptake. Required to oxidize Fe(2+) and release it from the transporter. Essential component of copper-dependent iron transport. This chain is Iron transport multicopper oxidase FET3 (FET3), found in Candida albicans (Yeast).